Here is a 192-residue protein sequence, read N- to C-terminus: GTP cyclohydrolase-2 (192 aa).

Residue 50-54 (RLHSE) coordinates GTP. 3 residues coordinate Zn(2+): C55, C66, and C68. GTP is bound by residues 92–94 (EGR) and T114. The active-site Proton acceptor is D126. The active-site Nucleophile is R128. GTP contacts are provided by T149 and K154.

Belongs to the GTP cyclohydrolase II family. The cofactor is Zn(2+).

It catalyses the reaction GTP + 4 H2O = 2,5-diamino-6-hydroxy-4-(5-phosphoribosylamino)-pyrimidine + formate + 2 phosphate + 3 H(+). It functions in the pathway cofactor biosynthesis; riboflavin biosynthesis; 5-amino-6-(D-ribitylamino)uracil from GTP: step 1/4. Its function is as follows. Catalyzes the conversion of GTP to 2,5-diamino-6-ribosylamino-4(3H)-pyrimidinone 5'-phosphate (DARP), formate and pyrophosphate. The sequence is that of GTP cyclohydrolase-2 from Helicobacter pylori (strain Shi470).